The sequence spans 162 residues: MYKIQLLSCIALTLALVANGAPTSSSTGNTMKEVKSLLLDLQLLLEKVKNPENLKLSKMHTFNFFMPKVNATELKHLNCLLEELKLLEDVLSLSPSKNLNPKEIKDSMDEIKDLMDNIKRIVLELQGSETSFKCEYDAATVKAVEFLNKWITFCQRIYSTMT.

The N-terminal stretch at 1–20 (MYKIQLLSCIALTLALVANG) is a signal peptide. O-linked (GalNAc...) threonine glycosylation is present at T23. Residue N70 is glycosylated (N-linked (GlcNAc...) asparagine). A disulfide bridge links C79 with C134.

This sequence belongs to the IL-2 family.

Its subcellular location is the secreted. In terms of biological role, cytokine produced by activated CD4-positive helper T-cells and to a lesser extend activated CD8-positive T-cells and natural killer (NK) cells that plays pivotal roles in the immune response and tolerance. Binds to a receptor complex composed of either the high-affinity trimeric IL-2R (IL2RA/CD25, IL2RB/CD122 and IL2RG/CD132) or the low-affinity dimeric IL-2R (IL2RB and IL2RG). Interaction with the receptor leads to oligomerization and conformation changes in the IL-2R subunits resulting in downstream signaling starting with phosphorylation of JAK1 and JAK3. In turn, JAK1 and JAK3 phosphorylate the receptor to form a docking site leading to the phosphorylation of several substrates including STAT5. This process leads to activation of several pathways including STAT, phosphoinositide-3-kinase/PI3K and mitogen-activated protein kinase/MAPK pathways. Functions as a T-cell growth factor and can increase NK-cell cytolytic activity as well. Promotes strong proliferation of activated B-cells and subsequently immunoglobulin production. Plays a pivotal role in regulating the adaptive immune system by controlling the survival and proliferation of regulatory T-cells, which are required for the maintenance of immune tolerance. Moreover, participates in the differentiation and homeostasis of effector T-cell subsets, including Th1, Th2, Th17 as well as memory CD8-positive T-cells. The sequence is that of Interleukin-2 (IL2) from Cervus elaphus (Red deer).